An 81-amino-acid chain; its full sequence is ATP synthase subunit c (81 aa).

The next 2 helical transmembrane spans lie at 6–26 (AAASVIAAALAVGLAAIGPGI) and 57–77 (LAFMEALTIYGLVVALVLLFA).

The protein belongs to the ATPase C chain family. In terms of assembly, F-type ATPases have 2 components, F(1) - the catalytic core - and F(0) - the membrane proton channel. F(1) has five subunits: alpha(3), beta(3), gamma(1), delta(1), epsilon(1). F(0) has four main subunits: a(1), b(1), b'(1) and c(10-14). The alpha and beta chains form an alternating ring which encloses part of the gamma chain. F(1) is attached to F(0) by a central stalk formed by the gamma and epsilon chains, while a peripheral stalk is formed by the delta, b and b' chains.

It localises to the cellular thylakoid membrane. F(1)F(0) ATP synthase produces ATP from ADP in the presence of a proton or sodium gradient. F-type ATPases consist of two structural domains, F(1) containing the extramembraneous catalytic core and F(0) containing the membrane proton channel, linked together by a central stalk and a peripheral stalk. During catalysis, ATP synthesis in the catalytic domain of F(1) is coupled via a rotary mechanism of the central stalk subunits to proton translocation. Functionally, key component of the F(0) channel; it plays a direct role in translocation across the membrane. A homomeric c-ring of between 10-14 subunits forms the central stalk rotor element with the F(1) delta and epsilon subunits. The sequence is that of ATP synthase subunit c from Picosynechococcus sp. (strain ATCC 27264 / PCC 7002 / PR-6) (Agmenellum quadruplicatum).